A 380-amino-acid chain; its full sequence is Chaperone protein DnaJ (380 aa).

In terms of domain architecture, J spans 5–70 (DYYEVLGVER…SKRAAYDQYG (66 aa)). The CR-type zinc finger occupies 139–217 (GTTVNIRVPT…CHGEGRVEES (79 aa)). Zn(2+) is bound by residues Cys152, Cys155, Cys169, Cys172, Cys191, Cys194, Cys205, and Cys208. CXXCXGXG motif repeat units follow at residues 152 to 159 (CKPCDGSG), 169 to 176 (CPTCGGIG), 191 to 198 (CPRCHGHG), and 205 to 212 (CDSCHGEG).

The protein belongs to the DnaJ family. Homodimer. It depends on Zn(2+) as a cofactor.

The protein resides in the cytoplasm. Participates actively in the response to hyperosmotic and heat shock by preventing the aggregation of stress-denatured proteins and by disaggregating proteins, also in an autonomous, DnaK-independent fashion. Unfolded proteins bind initially to DnaJ; upon interaction with the DnaJ-bound protein, DnaK hydrolyzes its bound ATP, resulting in the formation of a stable complex. GrpE releases ADP from DnaK; ATP binding to DnaK triggers the release of the substrate protein, thus completing the reaction cycle. Several rounds of ATP-dependent interactions between DnaJ, DnaK and GrpE are required for fully efficient folding. Also involved, together with DnaK and GrpE, in the DNA replication of plasmids through activation of initiation proteins. The protein is Chaperone protein DnaJ of Pseudomonas syringae pv. tomato (strain ATCC BAA-871 / DC3000).